We begin with the raw amino-acid sequence, 301 residues long: GTPase Era (301 aa).

An Era-type G domain is found at 7-175 (YCGFIAIVGR…AAIVRKHLPE (169 aa)). The segment at 15–22 (GRPNVGKS) is G1. 15–22 (GRPNVGKS) contacts GTP. Positions 41-45 (QTTRH) are G2. Residues 62–65 (DTPG) form a G3 region. GTP contacts are provided by residues 62-66 (DTPGL) and 124-127 (NKVD). The interval 124–127 (NKVD) is G4. Residues 154–156 (ISA) are G5. The 78-residue stretch at 206 to 283 (LGAELPYSVT…HLELWVKVKS (78 aa)) folds into the KH type-2 domain.

This sequence belongs to the TRAFAC class TrmE-Era-EngA-EngB-Septin-like GTPase superfamily. Era GTPase family. As to quaternary structure, monomer.

The protein resides in the cytoplasm. It is found in the cell inner membrane. In terms of biological role, an essential GTPase that binds both GDP and GTP, with rapid nucleotide exchange. Plays a role in 16S rRNA processing and 30S ribosomal subunit biogenesis and possibly also in cell cycle regulation and energy metabolism. The chain is GTPase Era from Escherichia coli O157:H7.